The following is a 1388-amino-acid chain: Kinesin-like protein KIF15-A (1388 aa).

The Kinesin motor domain occupies 26–364 (AIKVFVRIRP…LQFAQRAKLI (339 aa)). 110-117 (GQTGSGKT) is a binding site for ATP. A coiled-coil region spans residues 369-1383 (VVNEDTQGNV…ENLFLKESKK (1015 aa)). The tract at residues 1127–1156 (EQEKIRPASSNSSSPVVLPETPRTPEGNPY) is disordered. The necessary for its targeting to microtubule minus ends stretch occupies residues 1139–1388 (SSPVVLPETP…KESKKCEHCN (250 aa)).

Belongs to the TRAFAC class myosin-kinesin ATPase superfamily. Kinesin family. KLP2 subfamily. Homodimer. Dimerization is required for targeting to microtubule minus ends. Found in a complex with tpx2 and microtubules. Its association with microtubules and targeting to microtubule minus ends requires tpx2. Strongly expressed in testis and weakly in lung (at protein level).

It localises to the cytoplasm. The protein resides in the cytoskeleton. Its subcellular location is the microtubule organizing center. The protein localises to the centrosome. It is found in the spindle. It localises to the spindle pole. Its function is as follows. Plus-end directed kinesin-like motor enzyme involved in mitotic spindle assembly. Required for centrosome separation and maintenance of spindle bipolarity during mitosis. This chain is Kinesin-like protein KIF15-A (kif15-a), found in Xenopus laevis (African clawed frog).